Here is a 276-residue protein sequence, read N- to C-terminus: MGIKKFKPTSPGRRQMTVSTFEEITTSTPEKSLLAPLSKKAGRNNQGRITVRHQGGGHKRKYRIIDFKRNKDGIIGRVATIEYDPNRSANIALINYADGEKRYIIAPHNLKVGDQIVSGADADIKIGNALPMEKIPVGTTIHNIELKPGKGGQLVRAAGTSAQLLGRDGEFVIVRLSSGETRRIHNVCRATIGQVGNLDHELLNIGKAGRSRWLGIRPTVRGSVMNPNDHPHGGGEGRAPIGRKAPVTPWGKPTLGLKTRKKKNKSDQYIIRRRKK.

The interval 221–276 (RGSVMNPNDHPHGGGEGRAPIGRKAPVTPWGKPTLGLKTRKKKNKSDQYIIRRRKK) is disordered.

Belongs to the universal ribosomal protein uL2 family. In terms of assembly, part of the 50S ribosomal subunit. Forms a bridge to the 30S subunit in the 70S ribosome.

Its function is as follows. One of the primary rRNA binding proteins. Required for association of the 30S and 50S subunits to form the 70S ribosome, for tRNA binding and peptide bond formation. It has been suggested to have peptidyltransferase activity; this is somewhat controversial. Makes several contacts with the 16S rRNA in the 70S ribosome. The chain is Large ribosomal subunit protein uL2 from Brevibacillus brevis (strain 47 / JCM 6285 / NBRC 100599).